The primary structure comprises 83 residues: Cytochrome c oxidase subunit 7A2, mitochondrial (83 aa).

A mitochondrion-targeting transit peptide spans 1–23; sequence MLRNLLALRQIGQRTISTASRRH. Over 24–48 the chain is Mitochondrial matrix; that stretch reads FKNKVPEKQKLFQEDDEIPLYLKGG. N6-acetyllysine is present on K33. A helical transmembrane segment spans residues 49–77; the sequence is VADALLYRATMILTVGGTAYAIYELAVAS. Residues 78 to 83 are Mitochondrial intermembrane-facing; the sequence is FPKKQE.

This sequence belongs to the cytochrome c oxidase VIIa family. As to quaternary structure, component of the cytochrome c oxidase (complex IV, CIV), a multisubunit enzyme composed of 14 subunits. The complex is composed of a catalytic core of 3 subunits MT-CO1, MT-CO2 and MT-CO3, encoded in the mitochondrial DNA, and 11 supernumerary subunits COX4I1 (or COX4I2), COX5A, COX5B, COX6A1 (or COX6A2), COX6B1 (or COX6B2), COX6C, COX7A2 (or COX7A1), COX7B, COX7C, COX8A and NDUFA4, which are encoded in the nuclear genome. The complex exists as a monomer or a dimer and forms supercomplexes (SCs) in the inner mitochondrial membrane with NADH-ubiquinone oxidoreductase (complex I, CI) and ubiquinol-cytochrome c oxidoreductase (cytochrome b-c1 complex, complex III, CIII), resulting in different assemblies (supercomplex SCI(1)III(2)IV(1) and megacomplex MCI(2)III(2)IV(2)). Interacts with PET100.

Its subcellular location is the mitochondrion inner membrane. It functions in the pathway energy metabolism; oxidative phosphorylation. Component of the cytochrome c oxidase, the last enzyme in the mitochondrial electron transport chain which drives oxidative phosphorylation. The respiratory chain contains 3 multisubunit complexes succinate dehydrogenase (complex II, CII), ubiquinol-cytochrome c oxidoreductase (cytochrome b-c1 complex, complex III, CIII) and cytochrome c oxidase (complex IV, CIV), that cooperate to transfer electrons derived from NADH and succinate to molecular oxygen, creating an electrochemical gradient over the inner membrane that drives transmembrane transport and the ATP synthase. Cytochrome c oxidase is the component of the respiratory chain that catalyzes the reduction of oxygen to water. Electrons originating from reduced cytochrome c in the intermembrane space (IMS) are transferred via the dinuclear copper A center (CU(A)) of subunit 2 and heme A of subunit 1 to the active site in subunit 1, a binuclear center (BNC) formed by heme A3 and copper B (CU(B)). The BNC reduces molecular oxygen to 2 water molecules using 4 electrons from cytochrome c in the IMS and 4 protons from the mitochondrial matrix. The protein is Cytochrome c oxidase subunit 7A2, mitochondrial (COX7A2) of Homo sapiens (Human).